Consider the following 273-residue polypeptide: N(omega)-hydroxy-L-arginine amidinohydrolase (273 aa).

Positions 109, 111, 113, 198, and 200 each coordinate Mn(2+).

Belongs to the arginase family. Mn(2+) is required as a cofactor.

The catalysed reaction is N(omega)-hydroxy-L-arginine + H2O = hydroxyurea + L-ornithine. In terms of biological role, involved in the biosynthesis of the antibiotic D-cycloserine (DCS), a cyclic structural analog of D-alanine, used as an antitubercular agent. Catalyzes the hydrolysis of N(omega)-hydroxy-L-arginine (NHA) to yield hydroxyurea (HU) and L-ornithine. The protein is N(omega)-hydroxy-L-arginine amidinohydrolase of Streptomyces lavendulae.